A 131-amino-acid chain; its full sequence is MTTKRKPYVRPMTSTWWKKLPFYRFYMLREGTAVPTVWFSIELIFGLFALKHGAESWMGFVGFLQNPVVVILNLITLAAALLHTKTWFELAPKAANIIVKDEKMGPEPIIKGLWVVTAVVTVVILYVALFW.

The next 3 membrane-spanning stretches (helical) occupy residues 30 to 50 (EGTAVPTVWFSIELIFGLFAL), 57 to 77 (WMGFVGFLQNPVVVILNLITL), and 109 to 129 (IIKGLWVVTAVVTVVILYVAL).

Belongs to the FrdC family. In terms of assembly, part of an enzyme complex containing four subunits: a flavoprotein (FrdA), an iron-sulfur protein (FrdB), and two hydrophobic anchor proteins (FrdC and FrdD).

It is found in the cell inner membrane. Functionally, two distinct, membrane-bound, FAD-containing enzymes are responsible for the catalysis of fumarate and succinate interconversion; fumarate reductase is used in anaerobic growth, and succinate dehydrogenase is used in aerobic growth. Anchors the catalytic components of the fumarate reductase complex to the cell inner membrane, binds quinones. This chain is Fumarate reductase subunit C, found in Salmonella dublin (strain CT_02021853).